The sequence spans 475 residues: Zinc-regulated GTPase metalloprotein activator 1 (475 aa).

50-57 (GFLGSGKT) is a GTP binding site. Residues cysteine 116, cysteine 118, and cysteine 119 each contribute to the Zn(2+) site. A CXCC motif motif is present at residues 116-119 (CICC). Residues 119-123 (CTMRE) and 229-232 (NKCD) each bind GTP. A CobW C-terminal domain is found at 302 to 420 (IKSFIYKARR…LIESELNNCL (119 aa)). Residues 440–467 (IQLDEELEEEELEEEEEEGEYKDEIEMK) adopt a coiled-coil conformation. A compositionally biased stretch (acidic residues) spans 445–460 (ELEEEELEEEEEEGEY). The interval 445–475 (ELEEEELEEEEEEGEYKDEIEMKVDGSKFKK) is disordered. Over residues 461–475 (KDEIEMKVDGSKFKK) the composition is skewed to basic and acidic residues.

The protein belongs to the SIMIBI class G3E GTPase family. ZNG1 subfamily.

It carries out the reaction GTP + H2O = GDP + phosphate + H(+). Its function is as follows. Zinc chaperone that directly transfers zinc cofactor to target metalloproteins, thereby activating them. Zinc is transferred from the CXCC motif in the GTPase domain to the zinc binding site in target proteins in a process requiring GTP hydrolysis. The chain is Zinc-regulated GTPase metalloprotein activator 1 from Dictyostelium discoideum (Social amoeba).